The primary structure comprises 234 residues: Mediator of RNA polymerase II transcription subunit 4 (234 aa).

Positions 71–124 form a coiled coil; sequence HQEAYRRLVEKKNEVAGLEMRVRGLVKRLEEGRKELEGMIDQGERSLEDIQKSE. Residues 188-234 form a disordered region; the sequence is GVVGEEQKAPQKVEERREHVEHEESGRRYDPNAVFQLDLNSDESDED. Basic and acidic residues predominate over residues 189-217; that stretch reads VVGEEQKAPQKVEERREHVEHEESGRRYD.

This sequence belongs to the Mediator complex subunit 4 family. In terms of assembly, component of the Mediator complex.

Its subcellular location is the nucleus. Component of the Mediator complex, a coactivator involved in the regulated transcription of nearly all RNA polymerase II-dependent genes. Mediator functions as a bridge to convey information from gene-specific regulatory proteins to the basal RNA polymerase II transcription machinery. Mediator is recruited to promoters by direct interactions with regulatory proteins and serves as a scaffold for the assembly of a functional preinitiation complex with RNA polymerase II and the general transcription factors. This Cryptococcus neoformans var. neoformans serotype D (strain B-3501A) (Filobasidiella neoformans) protein is Mediator of RNA polymerase II transcription subunit 4 (MED4).